A 629-amino-acid polypeptide reads, in one-letter code: MIRAFSFPVSPERGRLRGWLEGSLAGLCELHWLRERQEYRVQQALRLAQPGMGGAEAEDEEDADEDEDAAAARRAAAALEEQLEALPGLVWDLGQQLGDLSLESGGLEQESGRSSGFYEDPSSTGGPDSPPSTFCGDSGFSGSSSYGRLGPSEPRGIYASERPKSLGDASPSAPEVVGARAAVPRSFSAPYPTAGGSAGPEACSSAERRARAGPFLTPSPLHAVAMRSPRPCGRPPTDSPDAGGAGRPLDGYISALLRRRRRRGAGQPRTSPGGADGGPRRQNSVRQRPPDASPSPGSARPAREPSLERVGGHPTSPAALSRAWASSWESEAAPEPAAPPAAPSPPDSPAEGRLVKAQYIPGAQAATRGLPGRAARRKPPPLTRGRSVEQSPPRERPRAAGRRGRMAEASGRRGSPRARKASRSQSETSLLGRASAVPSGPPKYPTAEREEPRPPRPRRGPAPTLAAQAAGSCRRWRSTAEIDAADGRRVRPRAPAARVPGPGPSPSAPQRRLLYGCAGSDSECSAGRLGPLGRRGPAGGVGGGYGESESSASEGESPAFSSASSDSDGSGGLVWPQQLVAATAASGGGAGAGAPAGPAKVFVKIKASHALKKKILRFRSGSLKVMTTV.

Serine 6 carries the phosphoserine modification. 2 disordered regions span residues proline 50 to alanine 76 and glycine 105 to valine 574. The span at glutamate 56–alanine 69 shows a compositional bias: acidic residues. Residues alanine 63–proline 87 are a coiled coil. Low complexity predominate over residues glycine 105–glycine 150. 2 positions are modified to phosphoserine: serine 165 and serine 239. Arginine 258 bears the Omega-N-methylarginine mark. Over residues proline 301–glycine 311 the composition is skewed to basic and acidic residues. A compositionally biased stretch (low complexity) spans serine 316–glutamate 335. The span at proline 336–serine 348 shows a compositional bias: pro residues. Serine 426 and serine 478 each carry phosphoserine. A compositionally biased stretch (low complexity) spans serine 525–arginine 535. Gly residues predominate over residues glycine 536–glycine 546. The span at glutamate 547–aspartate 568 shows a compositional bias: low complexity. A PDZ-binding motif is present at residues methionine 626–valine 629.

The protein belongs to the dapper family. Can form homodimers and heterodimers with DACT1 or DACT3. Interacts with CSNK1D, PKA catalytic subunit, PKC-type kinase, DVL1, DVL3, VANGL1, VANGL2 and CTNND1. Interacts with DVL2.

Functionally, may be involved in regulation of intracellular signaling pathways during development. Specifically thought to play a role in canonical and/or non-canonical Wnt signaling pathways through interaction with DSH (Dishevelled) family proteins. This is Dapper homolog 3 (DACT3) from Homo sapiens (Human).